Reading from the N-terminus, the 496-residue chain is Transmembrane transporter swnT (496 aa).

Helical transmembrane passes span Leu-40–Leu-60, Val-72–Glu-92, Ala-124–Leu-144, Trp-162–Glu-182, and Ala-191–Ala-211. N-linked (GlcNAc...) asparagine glycosylation occurs at Asn-225. Helical transmembrane passes span Leu-270–Val-290, Ala-314–Ile-334, Pro-368–Ala-388, Leu-396–Leu-416, Gly-434–Phe-454, and Tyr-467–Ala-487.

The protein belongs to the amino acid-polyamine-organocation (APC) superfamily. Amino acid/choline transporter (ACT) (TC 2.A.3.4) family.

Its subcellular location is the membrane. Functionally, transmembrane transporter; part of the gene cluster that mediates the biosynthesis of swainsonine, a cytotoxic fungal alkaloid and a potential cancer therapy drug. Does not mediate the secretion of SW and the exact role of swnT in SW biosynthesis remains to be determined. This Metarhizium robertsii (strain ARSEF 23 / ATCC MYA-3075) (Metarhizium anisopliae (strain ARSEF 23)) protein is Transmembrane transporter swnT.